The primary structure comprises 298 residues: MSDASRISPLDQARILSEALPHMQQYDEETIVIKYGGHAMGAEDVARQFARDIVLLEQTAINPVVVHGGGPQIATMLQRLGIKSEFAAGLRITDAATIEIVEMVLAGSINKQLVGYINEAGGKAVGLCGKDGNMVTASKATRTIADPDSNIEKVVDLGFVGEPEKVDLTLLNQLIGHELIPVLAPLATSKGGQTFNVNADTFAGAVAGALKAKRLLLLTDVPGVLDKSKKLIPDLSIGDARKLIADGTISGGMIPKVETCIYALEQGVGGVVIIDGKTPHAVLLELFTDQGTGTLIHK.

Residues glycine 69–glycine 70, arginine 91, and asparagine 196 each bind substrate.

It belongs to the acetylglutamate kinase family. ArgB subfamily.

It is found in the cytoplasm. It carries out the reaction N-acetyl-L-glutamate + ATP = N-acetyl-L-glutamyl 5-phosphate + ADP. It participates in amino-acid biosynthesis; L-arginine biosynthesis; N(2)-acetyl-L-ornithine from L-glutamate: step 2/4. Functionally, catalyzes the ATP-dependent phosphorylation of N-acetyl-L-glutamate. The sequence is that of Acetylglutamate kinase from Nitrobacter hamburgensis (strain DSM 10229 / NCIMB 13809 / X14).